A 209-amino-acid polypeptide reads, in one-letter code: MALLAEHLLKPLPADKQIETGPFLEAVSHLPPFFDCLGSPVFTPIKADISGNITKIKAVYDTNPAKFRTLQNILEVEKEMYGAEWPKVGATLALMWLKRGLRFIQVFLQSICDGERDENHPNLIRVNATKAYEMALKKYHGWIVQKIFQAALYAAPYKSDFLKALSKGQNVTEEECLEKIRLFLVNYTATIDVIYEMYTQMNAELNYKV.

Residue Ala-2 is modified to N-acetylalanine. 2 consecutive repeat copies span residues 45 to 55 (IKADISGNITK) and 56 to 66 (IKAVYDTNPAK). Residues 45-66 (IKADISGNITKIKAVYDTNPAK) are 2 X 12 AA approximate tandem repeats. 48–55 (DISGNITK) provides a ligand contact to beta-D-galactosyl-(1-&gt;4)-beta-D-glucosyl-(1&lt;-&gt;1)-N-[(9Z)-octadecenoyl]-sphing-4-enine. 2 residues coordinate beta-D-galactosyl-(1-&gt;4)-beta-D-glucosyl-(1&lt;-&gt;1)-N-[(9Z)-octadecenoyl]-sphing-4-enine: His-140 and Tyr-207.

This sequence belongs to the GLTP family. In terms of assembly, monomer. As to expression, detected in fibroblasts (at protein level). Detected in fibroblasts and in various cancer cell lines.

The protein localises to the cytoplasm. Accelerates the intermembrane transfer of various glycolipids. Catalyzes the transfer of various glycosphingolipids between membranes but does not catalyze the transfer of phospholipids. May be involved in the intracellular translocation of glucosylceramides. This chain is Glycolipid transfer protein (GLTP), found in Homo sapiens (Human).